The chain runs to 219 residues: Outer spore wall protein 4 (219 aa).

An N-terminal signal peptide occupies residues 1–19; the sequence is MRFQLFIYFYFTIVVIAGT. Residues 20 to 170 lie on the Extracellular side of the membrane; that stretch reads NTIQQFSDAG…KKKRLDRIKR (151 aa). Residues N42, N62, and N136 are each glycosylated (N-linked (GlcNAc...) asparagine). A helical transmembrane segment spans residues 171–191; that stretch reads ILTVSLLELGLAQGVADLCAV. The Cytoplasmic segment spans residues 192–193; it reads AP. The helical transmembrane segment at 194–214 threads the bilayer; sequence FACLLGVTVGSIGFIFWLALI. At 215-219 the chain is on the extracellular side; the sequence is YNAIQ.

This sequence belongs to the OSW4/6 family. In terms of processing, N-glycosylated.

It localises to the membrane. Involved in spore wall assembly. May be involved in maintaining genome integrity. In Saccharomyces cerevisiae (strain ATCC 204508 / S288c) (Baker's yeast), this protein is Outer spore wall protein 4.